A 714-amino-acid polypeptide reads, in one-letter code: Choline transporter-like protein 5 (714 aa).

Residues 1–33 (MGRRSAAPTSPFGEPRKFDPKFKGPIGKRHCTD) are Cytoplasmic-facing. The helical transmembrane segment at 34-54 (VLCCIIFVVVILGYIALGVVA) threads the bilayer. At 55–237 (WIHGDPRKII…KIFEDYASSW (183 aa)) the chain is on the extracellular side. 4 N-linked (GlcNAc...) asparagine glycosylation sites follow: N83, N132, N192, and N205. A helical membrane pass occupies residues 238–258 (YWILIALFIAMVVSLLFLILL). Over 259–261 (RFT) the chain is Cytoplasmic. A helical membrane pass occupies residues 262 to 282 (AGVFFWIFIIGVIGVVGYGIW). The Extracellular segment spans residues 283–320 (HCFWEYDSLKGVPGADLTIYDIGLQTDFRVYLQLRQTW). A helical transmembrane segment spans residues 321-341 (LAFMILLCIVEVIIILMLIFL). At 342-346 (RNRIR) the chain is on the cytoplasmic side. A helical transmembrane segment spans residues 347 to 367 (IAIALLQEGSRAIGYIMSTLF). The Extracellular segment spans residues 368–369 (YP). Residues 370–390 (IITFILIAICISYWAVTAVFM) traverse the membrane as a helical segment. At 391-455 (ATSGEPIYKV…QYILIFQLCN (65 aa)) the chain is on the cytoplasmic side. A helical transmembrane segment spans residues 456-476 (VFVFLWLVNFSIALGQCTLAG). The Extracellular portion of the chain corresponds to 477-510 (AFASYYWAFKKPADIPACPLFSSFGRAIRYHTGS). The helical transmembrane segment at 511-531 (LALGSLILALVQFIRIILEYL) threads the bilayer. The Cytoplasmic portion of the chain corresponds to 532 to 605 (DHKLKASQNS…RVAVLDKVTD (74 aa)). The chain crosses the membrane as a helical span at residues 606–626 (FLLFLGKVFVTGSVGVLAFFF). At 627 to 644 (FTRKIPVLTDEAPALNYY) the chain is on the extracellular side. Residues 645–665 (WVPLLTVLIGSYLIAHGFFSV) traverse the membrane as a helical segment. The Cytoplasmic segment spans residues 666-711 (YAMCVDTLFLCFCEDLERNNGSSSKPYYMSPNLHRILGKKEILSKK).

Belongs to the CTL (choline transporter-like) family.

Its subcellular location is the cell membrane. It carries out the reaction choline(out) + n H(+)(in) = choline(in) + n H(+)(out). Choline/H+ antiporter. The chain is Choline transporter-like protein 5 (slc44a5) from Xenopus tropicalis (Western clawed frog).